The following is a 65-amino-acid chain: DNA gyrase inhibitor YacG (65 aa).

C8, C11, C27, and C31 together coordinate Zn(2+). The tract at residues S43–K65 is disordered. Positions D48 to K65 are enriched in basic and acidic residues.

The protein belongs to the DNA gyrase inhibitor YacG family. Interacts with GyrB. Zn(2+) is required as a cofactor.

Its function is as follows. Inhibits all the catalytic activities of DNA gyrase by preventing its interaction with DNA. Acts by binding directly to the C-terminal domain of GyrB, which probably disrupts DNA binding by the gyrase. The chain is DNA gyrase inhibitor YacG from Nitrosospira multiformis (strain ATCC 25196 / NCIMB 11849 / C 71).